A 262-amino-acid polypeptide reads, in one-letter code: Ribose-5-phosphate isomerase A (262 aa).

Substrate contacts are provided by residues Thr-33–Thr-36, Asp-89–Asp-92, and Lys-102–Gly-105. Glu-111 functions as the Proton acceptor in the catalytic mechanism. Residue Lys-129 participates in substrate binding.

The protein belongs to the ribose 5-phosphate isomerase family. Homodimer.

It carries out the reaction aldehydo-D-ribose 5-phosphate = D-ribulose 5-phosphate. It participates in carbohydrate degradation; pentose phosphate pathway; D-ribose 5-phosphate from D-ribulose 5-phosphate (non-oxidative stage): step 1/1. Catalyzes the reversible conversion of ribose-5-phosphate to ribulose 5-phosphate. This chain is Ribose-5-phosphate isomerase A, found in Cereibacter sphaeroides (strain KD131 / KCTC 12085) (Rhodobacter sphaeroides).